The primary structure comprises 214 residues: Ribosomal RNA small subunit methyltransferase G (214 aa).

S-adenosyl-L-methionine-binding positions include Gly-77, Leu-82, 128–129 (VE), and Arg-143.

This sequence belongs to the methyltransferase superfamily. RNA methyltransferase RsmG family.

Its subcellular location is the cytoplasm. It catalyses the reaction guanosine(527) in 16S rRNA + S-adenosyl-L-methionine = N(7)-methylguanosine(527) in 16S rRNA + S-adenosyl-L-homocysteine. Specifically methylates the N7 position of guanine in position 527 of 16S rRNA. This chain is Ribosomal RNA small subunit methyltransferase G, found in Nitrosococcus oceani (strain ATCC 19707 / BCRC 17464 / JCM 30415 / NCIMB 11848 / C-107).